The chain runs to 353 residues: Paraneoplastic antigen Ma1 (353 aa).

Belongs to the PNMA family. In terms of tissue distribution, testis- and brain-specific. In some cancer patients, specifically expressed by paraneoplastic tumor cells.

Its subcellular location is the nucleus. The protein localises to the nucleolus. This chain is Paraneoplastic antigen Ma1 (PNMA1), found in Homo sapiens (Human).